A 151-amino-acid chain; its full sequence is MTMAKLFDKVIGIMGFADDDYEDDYFEEEEEKEEVREETRGTGNRKGAQVVSIHTQKQIKVVVMEPQAFEDSQSIADQLRNRRPVIVNLENAERNLAKRIVDFVSGATYALGGNMQKVGNGIFLFVPNNVDISGEMKDDFKEKGFFWSLTK.

It belongs to the SepF family. Homodimer. Interacts with FtsZ.

It localises to the cytoplasm. Cell division protein that is part of the divisome complex and is recruited early to the Z-ring. Probably stimulates Z-ring formation, perhaps through the cross-linking of FtsZ protofilaments. Its function overlaps with FtsA. This is Cell division protein SepF from Desulfitobacterium hafniense (strain Y51).